Reading from the N-terminus, the 208-residue chain is Imidazoleglycerol-phosphate dehydratase (208 aa).

The protein belongs to the imidazoleglycerol-phosphate dehydratase family.

The protein localises to the cytoplasm. The catalysed reaction is D-erythro-1-(imidazol-4-yl)glycerol 3-phosphate = 3-(imidazol-4-yl)-2-oxopropyl phosphate + H2O. It participates in amino-acid biosynthesis; L-histidine biosynthesis; L-histidine from 5-phospho-alpha-D-ribose 1-diphosphate: step 6/9. In Pseudarthrobacter chlorophenolicus (strain ATCC 700700 / DSM 12829 / CIP 107037 / JCM 12360 / KCTC 9906 / NCIMB 13794 / A6) (Arthrobacter chlorophenolicus), this protein is Imidazoleglycerol-phosphate dehydratase.